A 179-amino-acid chain; its full sequence is uncharacterized protein (179 aa).

The signal sequence occupies residues 1–27 (MNKSMIQSGGYVLLAGLILAMSSTLFA). Cys-43 and Cys-83 are disulfide-bonded.

This sequence belongs to the fimbrial protein family.

It is found in the fimbrium. Part of the yfcOPQRSUV fimbrial operon. Could contribute to adhesion to various surfaces in specific environmental niches. Increases adhesion to eukaryotic T24 bladder epithelial cells in the absence of fim genes. This is an uncharacterized protein from Escherichia coli (strain K12).